The sequence spans 593 residues: Alanine--tRNA ligase (593 aa).

Zn(2+) contacts are provided by His456, His460, Cys558, and His562.

It belongs to the class-II aminoacyl-tRNA synthetase family. Zn(2+) is required as a cofactor.

The protein resides in the cytoplasm. The enzyme catalyses tRNA(Ala) + L-alanine + ATP = L-alanyl-tRNA(Ala) + AMP + diphosphate. In terms of biological role, catalyzes the attachment of alanine to tRNA(Ala) in a two-step reaction: alanine is first activated by ATP to form Ala-AMP and then transferred to the acceptor end of tRNA(Ala). Also edits incorrectly charged Ser-tRNA(Ala) and Gly-tRNA(Ala) via its editing domain. The protein is Alanine--tRNA ligase (alaS) of Borrelia hermsii (strain HS1 / DAH).